The primary structure comprises 305 residues: Protoheme IX farnesyltransferase 2 (305 aa).

A run of 8 helical transmembrane segments spans residues 31 to 51 (VVMLLLLTALVGMCLASETWI), 53 to 73 (WKILLAGLTGIGFLSSAAAVI), 103 to 123 (ALVFAGVLTVVGYLILELWVN), 125 to 145 (LTALLTLASLVGYAFIYTMYL), 152 to 172 (NIVIGGLAGAAPPLLGWTAVT), 179 to 199 (ALLLVLIIFIWTPPHFWALAI), 231 to 251 (VLLALISVLPYLIGMTGAIYL), and 277 to 297 (AMKTFKFSIIHLMVLFVVLLV).

The protein belongs to the UbiA prenyltransferase family. Protoheme IX farnesyltransferase subfamily.

Its subcellular location is the cell inner membrane. The enzyme catalyses heme b + (2E,6E)-farnesyl diphosphate + H2O = Fe(II)-heme o + diphosphate. It functions in the pathway porphyrin-containing compound metabolism; heme O biosynthesis; heme O from protoheme: step 1/1. Functionally, converts heme B (protoheme IX) to heme O by substitution of the vinyl group on carbon 2 of heme B porphyrin ring with a hydroxyethyl farnesyl side group. The sequence is that of Protoheme IX farnesyltransferase 2 from Pseudoalteromonas atlantica (strain T6c / ATCC BAA-1087).